The sequence spans 341 residues: MIRADLATIPTYVPGRRLNNATKLSSNEVSFSPLPAAVDAVTEATQGANRYPDMGAVELREALAEHLEVEFDQVTVGCGSSALCQQLVQATCAQGDEVIFPWRSFEAYPIFAQVAGATPVAIPLTADQNHDLDAMAAAITDKTRLIFICNPNNPSGTTITQAQFDNFMEKVPNDVVVGLDEAYFEFNRADDTPVATEEIHRHDNVIGLRTFSKAYGLAGLRVGYAFGNAEIIAAMNKVAIPFAVNSAAQAAALASLNSADELMERVEETVEKRDAVVAALGTAPTQANFVWLPGEGAAELAAKLAEHGIVIRAFPEGARISVTNAEETDKLLRAWEAINAG.

Residue lysine 213 is modified to N6-(pyridoxal phosphate)lysine.

This sequence belongs to the class-II pyridoxal-phosphate-dependent aminotransferase family. As to quaternary structure, homodimer. Requires pyridoxal 5'-phosphate as cofactor.

The catalysed reaction is an aromatic L-alpha-amino acid + 2-oxoglutarate = an aromatic oxo-acid + L-glutamate. Its function is as follows. Aminotransferase that catalyzes the conversion of aromatic amino acids and 2-oxoglutarate into corresponding aromatic oxo acids and L-glutamate. The protein is Aromatic amino acid aminotransferase of Corynebacterium glutamicum (strain R).